Consider the following 217-residue polypeptide: Phosphatase MT3486 (217 aa).

The Nucleophile role is filled by Asp-9.

The protein belongs to the HAD-like hydrolase superfamily.

Able to hydrolyze geranyl diphosphate (GPP), farnesyl diphosphate (FPP) and geranylgeranyl diphosphate (GGPP) to respectively yield geraniol, farnesol and geranylgeraniol. This Mycobacterium tuberculosis (strain CDC 1551 / Oshkosh) protein is Phosphatase MT3486.